The primary structure comprises 434 residues: uncharacterized protein (434 aa).

The next 5 membrane-spanning stretches (helical) occupy residues 27 to 47 (IFLL…QSVI), 64 to 84 (FYLS…FVNW), 244 to 264 (IILA…ATVL), 289 to 309 (VPVN…PSLL), and 387 to 407 (LILT…GAVF).

The protein belongs to the CbiQ family.

Its subcellular location is the cell membrane. This is an uncharacterized protein from Mycoplasma pneumoniae (strain ATCC 29342 / M129 / Subtype 1) (Mycoplasmoides pneumoniae).